The following is a 516-amino-acid chain: Multicopper oxidase CueO (516 aa).

The tat-type signal signal peptide spans 1–28; it reads MQRRDFLKYSVALGVASALPLWSRAVFA. Plastocyanin-like domains are found at residues 55 to 165, 227 to 292, and 399 to 516; these read GQST…IEDD, PRGW…DNKP, and GGKF…GFTV. H101, H103, H141, and H143 together coordinate Cu cation. 7 residues coordinate Cu cation: H443, H446, H448, H499, C500, H501, and H505.

Belongs to the multicopper oxidase family. In terms of assembly, monomer. Cu cation is required as a cofactor. In terms of processing, predicted to be exported by the Tat system. The position of the signal peptide cleavage has not been experimentally proven.

Its subcellular location is the periplasm. It carries out the reaction 4 Cu(+) + O2 + 4 H(+) = 4 Cu(2+) + 2 H2O. Functionally, multicopper oxidase involved in copper homeostasis and copper tolerance under aerobic conditions. Is responsible for the oxidation of Cu(+) to the less harmful Cu(2+) in the periplasm, thereby preventing Cu(+) from entering the cytoplasm. The polypeptide is Multicopper oxidase CueO (cueO) (Escherichia coli O157:H7).